The primary structure comprises 705 residues: Methionine--tRNA ligase (705 aa).

Positions 17-27 match the 'HIGH' region motif; that stretch reads PYANGPVHLGH. Zn(2+) contacts are provided by Cys-149, Cys-152, Cys-162, and Cys-165. The 'KMSKS' region motif lies at 347–351; sequence KFSKS. Lys-350 serves as a coordination point for ATP. The tRNA-binding domain maps to 604-705; sequence EFQKVDLRVA…GEGINGQSVQ (102 aa).

The protein belongs to the class-I aminoacyl-tRNA synthetase family. MetG type 1 subfamily. In terms of assembly, homodimer. The cofactor is Zn(2+).

It is found in the cytoplasm. It carries out the reaction tRNA(Met) + L-methionine + ATP = L-methionyl-tRNA(Met) + AMP + diphosphate. Its function is as follows. Is required not only for elongation of protein synthesis but also for the initiation of all mRNA translation through initiator tRNA(fMet) aminoacylation. This is Methionine--tRNA ligase from Chlorobium chlorochromatii (strain CaD3).